The chain runs to 726 residues: Eukaryotic translation initiation factor 3 subunit B (726 aa).

Positions 1–94 are sufficient for interaction with HCR1 and TIF32; sequence MSAALEDIKL…LFVECASPAD (94 aa). Residues 1-219 are sufficient for interaction with PIC8; the sequence is MSAALEDIKL…GVVMWGGPHF (219 aa). Residues 37 to 120 enclose the RRM domain; the sequence is QYIVVCGAPV…HRLFIYTMRD (84 aa). 7 WD repeats span residues 142 to 182, 186 to 224, 235 to 283, 331 to 374, 442 to 485, 505 to 549, and 566 to 611; these read FPTS…EESV, RKNW…RLRR, VSPS…LQST, LKVP…MSCK, ELKD…FAPE, ITDK…TDKN, and NSFP…VKEE.

Belongs to the eIF-3 subunit B family. Component of the eukaryotic translation initiation factor 3 (eIF-3) complex.

It is found in the cytoplasm. Its function is as follows. RNA-binding component of the eukaryotic translation initiation factor 3 (eIF-3) complex, which is involved in protein synthesis of a specialized repertoire of mRNAs and, together with other initiation factors, stimulates binding of mRNA and methionyl-tRNAi to the 40S ribosome. The eIF-3 complex specifically targets and initiates translation of a subset of mRNAs involved in cell proliferation. In Vanderwaltozyma polyspora (strain ATCC 22028 / DSM 70294 / BCRC 21397 / CBS 2163 / NBRC 10782 / NRRL Y-8283 / UCD 57-17) (Kluyveromyces polysporus), this protein is Eukaryotic translation initiation factor 3 subunit B.